The following is a 409-amino-acid chain: Tryptophan synthase beta chain 1 (409 aa).

Lys104 is modified (N6-(pyridoxal phosphate)lysine).

It belongs to the TrpB family. As to quaternary structure, tetramer of two alpha and two beta chains. Pyridoxal 5'-phosphate serves as cofactor.

It carries out the reaction (1S,2R)-1-C-(indol-3-yl)glycerol 3-phosphate + L-serine = D-glyceraldehyde 3-phosphate + L-tryptophan + H2O. The protein operates within amino-acid biosynthesis; L-tryptophan biosynthesis; L-tryptophan from chorismate: step 5/5. The beta subunit is responsible for the synthesis of L-tryptophan from indole and L-serine. This chain is Tryptophan synthase beta chain 1 (trpB1), found in Nostoc sp. (strain PCC 7120 / SAG 25.82 / UTEX 2576).